The chain runs to 741 residues: Pentatricopeptide repeat-containing protein At1g08070, chloroplastic (741 aa).

PPR repeat units lie at residues 98 to 132 (NLLI…GLLP), 133 to 167 (NSYT…GCDL), 168 to 202 (DLYV…DVVS), 203 to 229 (YTAL…IPVK), 230 to 264 (DVVS…NVRP), 265 to 299 (DEST…GFGS), 300 to 330 (NLKI…LPYK), 331 to 365 (DVIS…GETP), 366 to 396 (NDVT…IDKR), 403 to 433 (ASSL…ILHK), 434 to 468 (SLSS…GIQP), 469 to 499 (DDIT…MTQD), and 505 to 535 (KLEH…MEME). The type E motif stretch occupies residues 540-615 (IWCSLLKACK…VPGCSSIEID (76 aa)). The tract at residues 616–646 (SVVHEFIIGDKFHPRNREIYGMLEEMEVLLE) is type E(+) motif. A type DYW motif region spans residues 647–741 (KAGFVPDTSE…DGVCSCNDYW (95 aa)).

Belongs to the PPR family. PCMP-H subfamily. In terms of assembly, interacts with ORRM1. Interacts with VAR3/OZ1.

It localises to the plastid. Its subcellular location is the chloroplast. In terms of biological role, involved in multiple sites RNA editing events in chloroplasts. Involved in the editing of the site 9 of ndhB (ndhB-9) and site 1 of ndhG (ndhG-1) transcripts, which are two plastid-encoded subunits of the chloroplast NAD(P)H dehydrogenase (NDH) complex. Not essential for the activity of the NDH complex of the photosynthetic electron transport chain. The polypeptide is Pentatricopeptide repeat-containing protein At1g08070, chloroplastic (PCMP-H12) (Arabidopsis thaliana (Mouse-ear cress)).